Reading from the N-terminus, the 207-residue chain is Na(+)-translocating ferredoxin:NAD(+) oxidoreductase complex subunit G (207 aa).

Residues 18-38 traverse the membrane as a helical segment; that stretch reads GLILFVISAVAACALALTNYV. Thr-185 carries the FMN phosphoryl threonine modification.

It belongs to the RnfG family. In terms of assembly, the complex is composed of six subunits: RnfA, RnfB, RnfC, RnfD, RnfE and RnfG. Requires FMN as cofactor.

Its subcellular location is the cell membrane. It carries out the reaction 2 reduced [2Fe-2S]-[ferredoxin] + Na(+)(in) + NAD(+) + H(+) = 2 oxidized [2Fe-2S]-[ferredoxin] + Na(+)(out) + NADH. In terms of biological role, part of a membrane-bound complex that couples electron transfer with translocation of ions across the membrane. Couples electron transfer from reduced ferredoxin to NAD(+) with electrogenic movement of Na(+) out of the cell. Involved in caffeate respiration. The chain is Na(+)-translocating ferredoxin:NAD(+) oxidoreductase complex subunit G from Acetobacterium woodii (strain ATCC 29683 / DSM 1030 / JCM 2381 / KCTC 1655 / WB1).